The sequence spans 277 residues: Protein EURL homolog (277 aa).

The disordered stretch occupies residues 173 to 201 (LGLWPGERPQNREQRDSRQRRHSGHSREE). Residues 197–229 (HSREELMRKNVEELRQLNEQLLLQIQNVFEELS) adopt a coiled-coil conformation.

This sequence belongs to the EURL family.

Plays a role in cortical progenitor cell proliferation and differentiation. May promote dendritic spine development of post-migratory cortical projection neurons by modulating the beta-catenin signaling pathway. This is Protein EURL homolog from Danio rerio (Zebrafish).